Consider the following 568-residue polypeptide: Protein KATNIP homolog (568 aa).

Basic and acidic residues predominate over residues 1-20 (MSDSDLKEIEKNAENIKLEP). Residues 1–30 (MSDSDLKEIEKNAENIKLEPAEDEVNEEDQ) are disordered. Over residues 21–30 (AEDEVNEEDQ) the composition is skewed to acidic residues.

In terms of tissue distribution, expressed in most ciliated neuronal cells. Not expressed in non-ciliated cells.

The protein resides in the cytoplasm. The protein localises to the cytoskeleton. It localises to the cilium axoneme. It is found in the cilium basal body. In terms of biological role, may regulate ciliary A-tubule number and, along with arl-13, controls cilium integrity. This is Protein KATNIP homolog from Caenorhabditis elegans.